Here is a 190-residue protein sequence, read N- to C-terminus: Translation initiation factor IF-3 (190 aa).

This sequence belongs to the IF-3 family. Monomer.

The protein resides in the cytoplasm. Functionally, IF-3 binds to the 30S ribosomal subunit and shifts the equilibrium between 70S ribosomes and their 50S and 30S subunits in favor of the free subunits, thus enhancing the availability of 30S subunits on which protein synthesis initiation begins. In Prochlorococcus marinus (strain AS9601), this protein is Translation initiation factor IF-3.